Reading from the N-terminus, the 543-residue chain is Malate synthase (543 aa).

The protein belongs to the malate synthase family. In terms of assembly, homodimer.

The protein resides in the cytoplasm. The enzyme catalyses glyoxylate + acetyl-CoA + H2O = (S)-malate + CoA + H(+). Its pathway is carbohydrate metabolism; glyoxylate cycle; (S)-malate from isocitrate: step 2/2. In Streptomyces arenae, this protein is Malate synthase (aceB).